The sequence spans 453 residues: Protein LIAT1 (453 aa).

The tract at residues 1–152 is disordered; it reads METRGPGLAV…HLPSDSSTVS (152 aa). The segment at 82 to 103 is lysine-rich domain; it reads KRKVKKKKRKKKTKGSGKGDDK. The segment covering 83 to 96 has biased composition (basic residues); that stretch reads RKVKKKKRKKKTKG. Residues 106-117 are compositionally biased toward low complexity; it reads SQSLKSQPLSSS. Residues 125–145 are compositionally biased toward basic and acidic residues; it reads CKERGPKPEHRQSKVEKKHLP. The segment at 145–197 is interaction with ATE1; the sequence is PSDSSTVSLPDFAEIENLANRINESLRWDGILADPEAEKERIRIYKLNRRKRY. 20 consecutive repeat copies span residues 201-210, 211-220, 221-230, 231-240, 241-250, 251-260, 261-270, 271-280, 281-290, 291-300, 301-310, 311-320, 321-330, 331-340, 341-350, 351-360, 361-370, 371-380, 381-390, and 391-400. The segment at 201-400 is 20 X 10 AA approximate tandem repeat of A-L-K-G-F-H-P-D-P-E; sequence ALKGFHPDPE…ALKGFHTDPN (200 aa). Disordered stretches follow at residues 225–306 and 320–432; these read FHPD…KGFH and EALK…CPNL. The segment covering 320-396 has biased composition (basic and acidic residues); the sequence is EALKGFHPDP…PDPEALKGFH (77 aa).

In terms of assembly, self-associates (via Lys-rich domain); targets LIAT1 to the nucleolus. Interacts with ATE1; it is not a substrate of ATE1, the interaction takes place in the cytoplasm and seems to increase ATE1 arginyltransferase activity. Interacts with JMJD6 and MRPS14. Post-translationally, post-translationally modified by JMJD6 lysyl-hydroxylase activity at its Lys-rich domain, which inhibits its self-association and nucleolar localization.

It localises to the nucleus. The protein localises to the nucleolus. It is found in the cytoplasm. Functionally, participates in nucleolar liquid-liquid phase separation (LLPS) through its N-terminal intrinsically disordered region (IDR). May be involved in ATE1-mediated N-terminal arginylation. This chain is Protein LIAT1, found in Homo sapiens (Human).